Reading from the N-terminus, the 139-residue chain is Peptide methionine sulfoxide reductase MsrB (139 aa).

In terms of domain architecture, MsrB spans 9-131 (TPSDNTEMTE…NSASLSFIDD (123 aa)). Zn(2+) contacts are provided by Cys48, Cys51, Cys97, and Cys100. Catalysis depends on Cys120, which acts as the Nucleophile.

It belongs to the MsrB Met sulfoxide reductase family. Zn(2+) serves as cofactor.

The enzyme catalyses L-methionyl-[protein] + [thioredoxin]-disulfide + H2O = L-methionyl-(R)-S-oxide-[protein] + [thioredoxin]-dithiol. In Pectobacterium atrosepticum (strain SCRI 1043 / ATCC BAA-672) (Erwinia carotovora subsp. atroseptica), this protein is Peptide methionine sulfoxide reductase MsrB.